The following is a 96-amino-acid chain: (4S)-4-hydroxy-5-phosphonooxypentane-2,3-dione isomerase (96 aa).

An ABM domain is found at 2–91 (HVTLVEINVK…MTGPRKKTTF (90 aa)).

It belongs to the LsrG family. In terms of assembly, homodimer.

The protein localises to the cytoplasm. The enzyme catalyses (2S)-2-hydroxy-3,4-dioxopentyl phosphate = 3-hydroxy-2,4-dioxopentyl phosphate. Its function is as follows. Involved in the degradation of phospho-AI-2, thereby terminating induction of the lsr operon and closing the AI-2 signaling cycle. Catalyzes the conversion of (4S)-4-hydroxy-5-phosphonooxypentane-2,3-dione (P-DPD) to 3-hydroxy-5-phosphonooxypentane-2,4-dione (P-HPD). The protein is (4S)-4-hydroxy-5-phosphonooxypentane-2,3-dione isomerase of Yersinia enterocolitica serotype O:8 / biotype 1B (strain NCTC 13174 / 8081).